The sequence spans 340 residues: Lipoyl synthase (340 aa).

7 residues coordinate [4Fe-4S] cluster: Cys83, Cys88, Cys94, Cys109, Cys113, Cys116, and Ser323. Residues 95-312 (FSGGTATFMI…AEEGYKMGFK (218 aa)) form the Radical SAM core domain.

It belongs to the radical SAM superfamily. Lipoyl synthase family. Requires [4Fe-4S] cluster as cofactor.

Its subcellular location is the cytoplasm. The enzyme catalyses [[Fe-S] cluster scaffold protein carrying a second [4Fe-4S](2+) cluster] + N(6)-octanoyl-L-lysyl-[protein] + 2 oxidized [2Fe-2S]-[ferredoxin] + 2 S-adenosyl-L-methionine + 4 H(+) = [[Fe-S] cluster scaffold protein] + N(6)-[(R)-dihydrolipoyl]-L-lysyl-[protein] + 4 Fe(3+) + 2 hydrogen sulfide + 2 5'-deoxyadenosine + 2 L-methionine + 2 reduced [2Fe-2S]-[ferredoxin]. The protein operates within protein modification; protein lipoylation via endogenous pathway; protein N(6)-(lipoyl)lysine from octanoyl-[acyl-carrier-protein]: step 2/2. Its function is as follows. Catalyzes the radical-mediated insertion of two sulfur atoms into the C-6 and C-8 positions of the octanoyl moiety bound to the lipoyl domains of lipoate-dependent enzymes, thereby converting the octanoylated domains into lipoylated derivatives. The polypeptide is Lipoyl synthase (Pseudomonas fluorescens (strain Pf0-1)).